The sequence spans 601 residues: uncharacterized protein (601 aa).

The next 3 helical transmembrane spans lie at 74–94 (IFFF…VFSI), 104–124 (VSFL…PNDG), and 531–551 (LVLL…NYYY).

The protein resides in the endoplasmic reticulum membrane. This is an uncharacterized protein from Schizosaccharomyces pombe (strain 972 / ATCC 24843) (Fission yeast).